We begin with the raw amino-acid sequence, 106 residues long: Met repressor (106 aa).

Belongs to the MetJ family. As to quaternary structure, homodimer.

It localises to the cytoplasm. In terms of biological role, this regulatory protein, when combined with SAM (S-adenosylmethionine) represses the expression of the methionine regulon and of enzymes involved in SAM synthesis. The chain is Met repressor from Vibrio campbellii (strain ATCC BAA-1116).